A 399-amino-acid chain; its full sequence is 26S proteasome regulatory subunit S10B homolog B (399 aa).

180–187 (GPPGTGKT) provides a ligand contact to ATP. Lysine 203 participates in a covalent cross-link: Glycyl lysine isopeptide (Lys-Gly) (interchain with G-Cter in ubiquitin).

It belongs to the AAA ATPase family. Component of the 19S regulatory particle (RP/PA700) base subcomplex of the 26S proteasome. The 26S proteasome is composed of a core protease (CP), known as the 20S proteasome, capped at one or both ends by the 19S regulatory particle (RP/PA700). The RP/PA700 complex is composed of at least 17 different subunits in two subcomplexes, the base and the lid, which form the portions proximal and distal to the 20S proteolytic core, respectively.

The protein localises to the cytoplasm. It is found in the nucleus. Functionally, the 26S proteasome is involved in the ATP-dependent degradation of ubiquitinated proteins. The regulatory (or ATPase) complex confers ATP dependency and substrate specificity to the 26S complex. The chain is 26S proteasome regulatory subunit S10B homolog B (RPT4B) from Arabidopsis thaliana (Mouse-ear cress).